A 148-amino-acid chain; its full sequence is 3-hydroxyacyl-[acyl-carrier-protein] dehydratase FabZ (148 aa).

His-49 is an active-site residue.

It belongs to the thioester dehydratase family. FabZ subfamily.

Its subcellular location is the cytoplasm. It catalyses the reaction a (3R)-hydroxyacyl-[ACP] = a (2E)-enoyl-[ACP] + H2O. In terms of biological role, involved in unsaturated fatty acids biosynthesis. Catalyzes the dehydration of short chain beta-hydroxyacyl-ACPs and long chain saturated and unsaturated beta-hydroxyacyl-ACPs. This is 3-hydroxyacyl-[acyl-carrier-protein] dehydratase FabZ from Ehrlichia canis (strain Jake).